Here is a 382-residue protein sequence, read N- to C-terminus: Gap junction alpha-1 protein (382 aa).

Over 2–23 the chain is Cytoplasmic; that stretch reads GDWSALGKLLDKVQAYSTAGGK. Position 5 is a phosphoserine (serine 5). A helical membrane pass occupies residues 24–44; sequence VWLSVLFIFRILLLGTAVESA. Over 45 to 76 the chain is Extracellular; that stretch reads WGDEQSAFRCNTQQPGCENVCYDKSFPISHVR. 2 cysteine pairs are disulfide-bonded: cysteine 54–cysteine 192 and cysteine 187–cysteine 198. A helical transmembrane segment spans residues 77–97; that stretch reads FWVLQIIFVSVPTLLYLAHVF. The Cytoplasmic portion of the chain corresponds to 98–155; the sequence is YVMRKEEKLNKKEEELKVAQTDGVNVEMHLKQIEIKKFKYGIEEHGKVKMRGGLLRTY. A Glycyl lysine isopeptide (Lys-Gly) (interchain with G-Cter in SUMO) cross-link involves residue lysine 144. Residues 156 to 176 form a helical membrane-spanning segment; the sequence is IISILFKSVFEVAFLLIQWYI. Residues 177 to 207 lie on the Extracellular side of the membrane; sequence YGFSLSAVYTCKRDPCPHQVDCFLSRPTEKT. Residues 208 to 228 form a helical membrane-spanning segment; the sequence is IFIIFMLVVSLVSLALNIIEL. At 229-382 the chain is on the cytoplasmic side; the sequence is FYVFFKGVKD…SRPRPDDLEI (154 aa). Lysine 237 participates in a covalent cross-link: Glycyl lysine isopeptide (Lys-Gly) (interchain with G-Cter in SUMO). An interaction with NOV region spans residues 244 to 382; it reads SDPYHATTGP…SRPRPDDLEI (139 aa). Tyrosine 247 carries the post-translational modification Phosphotyrosine. 3 positions are modified to phosphoserine: serine 255, serine 257, and serine 262. Positions 264-382 are interaction with UBQLN4; sequence KYAYFNGCSS…SRPRPDDLEI (119 aa). Residue cysteine 271 is modified to S-nitrosocysteine. Threonine 275 is subject to Phosphothreonine. A phosphoserine mark is found at serine 306, serine 314, and serine 325. Positions 317 to 332 are enriched in polar residues; that stretch reads QNRMGQAGSTISNSHA. Residues 317–382 form a disordered region; sequence QNRMGQAGST…SRPRPDDLEI (66 aa). At threonine 326 the chain carries Phosphothreonine. Serine 328, serine 330, serine 341, and serine 365 each carry phosphoserine. Positions 362-374 are enriched in low complexity; sequence RPSSRASSRASSR. Serine 368 bears the Phosphoserine; by PKC/PRKCG and PKC/PRKCD mark. Phosphoserine occurs at positions 369 and 373.

It belongs to the connexin family. Alpha-type (group II) subfamily. A connexon is composed of a hexamer of connexins. Interacts with CSNK1D. Interacts with RIC1/CIP150. Interacts (via C-terminus) with TJP1. Interacts (via C-terminus) with SRC (via SH3 domain). Interacts (not ubiquitinated) with UBQLN4 (via UBA domain). Interacts with CNST. Interacts with SGSM3. Interacts with NOV. Interacts with TMEM65. Interacts with ANK3/ANKG and PKP2. Phosphorylation at Ser-325, Ser-328 and Ser-330 by CK1 modulates gap junction assembly. Phosphorylated at Ser-368 by PRKCG; phosphorylation induces disassembly of gap junction plaques and inhibition of gap junction activity. Phosphorylation at Ser-368 by PRKCD triggers its internalization into small vesicles leading to proteasome-mediated degradation. Post-translationally, sumoylated with SUMO1, SUMO2 and SUMO3, which may regulate the level of functional Cx43 gap junctions at the plasma membrane. May be desumoylated by SENP1 or SENP2. In terms of processing, acetylated in the developing cortex; leading to delocalization from the cell membrane. S-nitrosylation at Cys-271 is enriched at the muscle endothelial gap junction in arteries, it augments channel permeability and may regulate of smooth muscle cell to endothelial cell communication. Expressed in heart, non-sensory epithelial cells, and in fibrocytes of the spiral ligament and the spiral limbus. Expressed in bladder smooth muscle cells (at protein level). Expressed in astrocytes (at protein level).

It is found in the cell membrane. It localises to the cell junction. The protein localises to the gap junction. The protein resides in the endoplasmic reticulum. In terms of biological role, gap junction protein that acts as a regulator of bladder capacity. A gap junction consists of a cluster of closely packed pairs of transmembrane channels, the connexons, through which materials of low MW diffuse from one cell to a neighboring cell. Negative regulator of bladder functional capacity: acts by enhancing intercellular electrical and chemical transmission, thus sensitizing bladder muscles to cholinergic neural stimuli and causing them to contract. May play a role in cell growth inhibition through the regulation of NOV expression and localization. Plays an essential role in gap junction communication in the ventricles. Its function is as follows. Connexin 43 is possibly the ATP-induced pore of mouse macrophages. The chain is Gap junction alpha-1 protein (Gja1) from Mus musculus (Mouse).